Here is a 181-residue protein sequence, read N- to C-terminus: Inner membrane-spanning protein YciB (181 aa).

5 helical membrane-spanning segments follow: residues 22–42 (IYTATGALIAATAVQIAILYF), 50–70 (MHLVTFAMVTVFGTLTLAFHD), 72–92 (AFIKWKVTIIYSLFAIALAVS), 118–138 (VTWYWALFFIGCGVLNVYVAF), and 148–168 (FKVFGLTALTLLNTVISVFYI).

The protein belongs to the YciB family.

The protein localises to the cell inner membrane. Its function is as follows. Plays a role in cell envelope biogenesis, maintenance of cell envelope integrity and membrane homeostasis. The polypeptide is Inner membrane-spanning protein YciB (Shewanella denitrificans (strain OS217 / ATCC BAA-1090 / DSM 15013)).